The following is a 248-amino-acid chain: Ubiquinone biosynthesis O-methyltransferase (248 aa).

4 residues coordinate S-adenosyl-L-methionine: Arg41, Gly72, Asp93, and Met136.

It belongs to the methyltransferase superfamily. UbiG/COQ3 family.

It carries out the reaction a 3-demethylubiquinol + S-adenosyl-L-methionine = a ubiquinol + S-adenosyl-L-homocysteine + H(+). It catalyses the reaction a 3-(all-trans-polyprenyl)benzene-1,2-diol + S-adenosyl-L-methionine = a 2-methoxy-6-(all-trans-polyprenyl)phenol + S-adenosyl-L-homocysteine + H(+). Its pathway is cofactor biosynthesis; ubiquinone biosynthesis. Its function is as follows. O-methyltransferase that catalyzes the 2 O-methylation steps in the ubiquinone biosynthetic pathway. The sequence is that of Ubiquinone biosynthesis O-methyltransferase from Brucella anthropi (strain ATCC 49188 / DSM 6882 / CCUG 24695 / JCM 21032 / LMG 3331 / NBRC 15819 / NCTC 12168 / Alc 37) (Ochrobactrum anthropi).